A 256-amino-acid chain; its full sequence is Thiazole synthase (256 aa).

The Schiff-base intermediate with DXP role is filled by Lys96. 1-deoxy-D-xylulose 5-phosphate-binding positions include Gly157, 183-184, and 205-206; these read AG and NT.

Belongs to the ThiG family. In terms of assembly, homotetramer. Forms heterodimers with either ThiH or ThiS.

Its subcellular location is the cytoplasm. The enzyme catalyses [ThiS sulfur-carrier protein]-C-terminal-Gly-aminoethanethioate + 2-iminoacetate + 1-deoxy-D-xylulose 5-phosphate = [ThiS sulfur-carrier protein]-C-terminal Gly-Gly + 2-[(2R,5Z)-2-carboxy-4-methylthiazol-5(2H)-ylidene]ethyl phosphate + 2 H2O + H(+). The protein operates within cofactor biosynthesis; thiamine diphosphate biosynthesis. In terms of biological role, catalyzes the rearrangement of 1-deoxy-D-xylulose 5-phosphate (DXP) to produce the thiazole phosphate moiety of thiamine. Sulfur is provided by the thiocarboxylate moiety of the carrier protein ThiS. In vitro, sulfur can be provided by H(2)S. This is Thiazole synthase from Clostridium beijerinckii (strain ATCC 51743 / NCIMB 8052) (Clostridium acetobutylicum).